Reading from the N-terminus, the 356-residue chain is 5-formaminoimidazole-4-carboxamide-1-(beta)-D-ribofuranosyl 5'-monophosphate synthetase (356 aa).

Histidine 27 and serine 94 together coordinate 5-amino-1-(5-phospho-beta-D-ribosyl)imidazole-4-carboxamide. The 218-residue stretch at 116–333 (RCLAWESDRE…YSDLIEKGLS (218 aa)) folds into the ATP-grasp domain. ATP-binding positions include 145–196 (AELI…TRYY) and glutamate 226. Asparagine 255 contacts 5-amino-1-(5-phospho-beta-D-ribosyl)imidazole-4-carboxamide. Residues glutamate 293 and glutamate 306 each contribute to the Mg(2+) site.

This sequence belongs to the phosphohexose mutase family. Mg(2+) serves as cofactor. Mn(2+) is required as a cofactor.

It catalyses the reaction 5-amino-1-(5-phospho-beta-D-ribosyl)imidazole-4-carboxamide + formate + ATP = 5-formamido-1-(5-phospho-D-ribosyl)imidazole-4-carboxamide + ADP + phosphate. Its pathway is purine metabolism; IMP biosynthesis via de novo pathway; 5-formamido-1-(5-phospho-D-ribosyl)imidazole-4-carboxamide from 5-amino-1-(5-phospho-D-ribosyl)imidazole-4-carboxamide (formate route): step 1/1. Catalyzes the ATP- and formate-dependent formylation of 5-aminoimidazole-4-carboxamide-1-beta-d-ribofuranosyl 5'-monophosphate (AICAR) to 5-formaminoimidazole-4-carboxamide-1-beta-d-ribofuranosyl 5'-monophosphate (FAICAR) in the absence of folates. The sequence is that of 5-formaminoimidazole-4-carboxamide-1-(beta)-D-ribofuranosyl 5'-monophosphate synthetase from Methanothrix thermoacetophila (strain DSM 6194 / JCM 14653 / NBRC 101360 / PT) (Methanosaeta thermophila).